A 101-amino-acid polypeptide reads, in one-letter code: Putative septation protein SpoVG (101 aa).

The protein belongs to the SpoVG family.

In terms of biological role, could be involved in septation. The polypeptide is Putative septation protein SpoVG (Anaeromyxobacter dehalogenans (strain 2CP-C)).